A 102-amino-acid polypeptide reads, in one-letter code: PqqA binding protein (102 aa).

The protein belongs to the PqqD family. Monomer. Interacts with PqqE.

It functions in the pathway cofactor biosynthesis; pyrroloquinoline quinone biosynthesis. Its function is as follows. Functions as a PqqA binding protein and presents PqqA to PqqE, in the pyrroloquinoline quinone (PQQ) biosynthetic pathway. This is PqqA binding protein from Rhodopseudomonas palustris (strain TIE-1).